A 364-amino-acid polypeptide reads, in one-letter code: UDP-N-acetylglucosamine--N-acetylmuramyl-(pentapeptide) pyrophosphoryl-undecaprenol N-acetylglucosamine transferase (364 aa).

UDP-N-acetyl-alpha-D-glucosamine contacts are provided by residues 10–12, asparagine 124, serine 195, isoleucine 250, and glutamine 295; that span reads TGG.

Belongs to the glycosyltransferase 28 family. MurG subfamily.

It localises to the cell membrane. The enzyme catalyses Mur2Ac(oyl-L-Ala-gamma-D-Glu-L-Lys-D-Ala-D-Ala)-di-trans,octa-cis-undecaprenyl diphosphate + UDP-N-acetyl-alpha-D-glucosamine = beta-D-GlcNAc-(1-&gt;4)-Mur2Ac(oyl-L-Ala-gamma-D-Glu-L-Lys-D-Ala-D-Ala)-di-trans,octa-cis-undecaprenyl diphosphate + UDP + H(+). Its pathway is cell wall biogenesis; peptidoglycan biosynthesis. Cell wall formation. Catalyzes the transfer of a GlcNAc subunit on undecaprenyl-pyrophosphoryl-MurNAc-pentapeptide (lipid intermediate I) to form undecaprenyl-pyrophosphoryl-MurNAc-(pentapeptide)GlcNAc (lipid intermediate II). This is UDP-N-acetylglucosamine--N-acetylmuramyl-(pentapeptide) pyrophosphoryl-undecaprenol N-acetylglucosamine transferase from Levilactobacillus brevis (strain ATCC 367 / BCRC 12310 / CIP 105137 / JCM 1170 / LMG 11437 / NCIMB 947 / NCTC 947) (Lactobacillus brevis).